Consider the following 124-residue polypeptide: Small ribosomal subunit protein uS12 (124 aa).

D89 bears the 3-methylthioaspartic acid mark.

It belongs to the universal ribosomal protein uS12 family. As to quaternary structure, part of the 30S ribosomal subunit. Contacts proteins S8 and S17. May interact with IF1 in the 30S initiation complex.

Its function is as follows. With S4 and S5 plays an important role in translational accuracy. Interacts with and stabilizes bases of the 16S rRNA that are involved in tRNA selection in the A site and with the mRNA backbone. Located at the interface of the 30S and 50S subunits, it traverses the body of the 30S subunit contacting proteins on the other side and probably holding the rRNA structure together. The combined cluster of proteins S8, S12 and S17 appears to hold together the shoulder and platform of the 30S subunit. The sequence is that of Small ribosomal subunit protein uS12 from Prochlorococcus marinus (strain SARG / CCMP1375 / SS120).